Here is a 303-residue protein sequence, read N- to C-terminus: Probable cell division protein WhiA (303 aa).

Positions 272–303 (SIQQVADALEFPITKSGVNHRLRKINKIADDL) form a DNA-binding region, H-T-H motif.

This sequence belongs to the WhiA family.

Its function is as follows. Involved in cell division and chromosome segregation. In Streptococcus pyogenes serotype M12 (strain MGAS2096), this protein is Probable cell division protein WhiA.